Consider the following 995-residue polypeptide: S1 RNA-binding domain-containing protein 1 (995 aa).

A disordered region spans residues 23 to 78 (SFSELSSASEEDDKEDSAWEPQKKVPRSRKQPPPKESKPKRMPQVKKNAPQISDGS). A Glycyl lysine isopeptide (Lys-Gly) (interchain with G-Cter in SUMO2) cross-link involves residue Lys-84. Residues 116-132 (TKRKCAAQPHAVRRTKK) show a composition bias toward basic residues. The segment at 116–164 (TKRKCAAQPHAVRRTKKLKVDEETSKASYLEGESNSSETPSTSTVWGGT) is disordered. Lys-134 participates in a covalent cross-link: Glycyl lysine isopeptide (Lys-Gly) (interchain with G-Cter in SUMO2). A compositionally biased stretch (low complexity) spans 146 to 159 (EGESNSSETPSTST). Residues Lys-166, Lys-167, and Lys-183 each participate in a glycyl lysine isopeptide (Lys-Gly) (interchain with G-Cter in SUMO2) cross-link. Residue Lys-185 forms a Glycyl lysine isopeptide (Lys-Gly) (interchain with G-Cter in SUMO1); alternate linkage. Residue Lys-185 forms a Glycyl lysine isopeptide (Lys-Gly) (interchain with G-Cter in SUMO2); alternate linkage. Residues 258 to 288 (ADSLREVQQTLEELRAVAKKVHSTIQKIKKE) adopt a coiled-coil conformation. Ser-861 is modified (phosphoserine). The S1 motif domain maps to 919–992 (GTVLTGKVEN…PRSRITLDLI (74 aa)). Lys-955 is covalently cross-linked (Glycyl lysine isopeptide (Lys-Gly) (interchain with G-Cter in SUMO2)). Ser-964 bears the Phosphoserine mark.

In Pongo abelii (Sumatran orangutan), this protein is S1 RNA-binding domain-containing protein 1 (SRBD1).